The chain runs to 773 residues: Circadian clock protein PASD1 (773 aa).

In terms of domain architecture, PAS spans 30-102 (YDYFNQVTLQ…IILKFPLLNS (73 aa)). Positions 313-361 (SVDQEGPMDQQDPENPVAPLDQAGLMDPVDPEDSVDLGAAGASAQPLQP) are disordered. The necessary for transcriptional repression stretch occupies residues 365 to 412 (VAYDIISQELELMKKLKEQLEERTWLLHDAIQNQQNALELMMDHLQKQ). Residues 365 to 412 (VAYDIISQELELMKKLKEQLEERTWLLHDAIQNQQNALELMMDHLQKQ) are a coiled coil. Disordered stretches follow at residues 427 to 448 (SEAVPKKQQKQHAGQVKRPLPH), 506 to 569 (QRKV…QLQE), and 732 to 773 (GVEG…NKPC). A coiled-coil region spans residues 475-553 (VAFNQQQLVQ…QERKKWQGQM (79 aa)). Residues 506-536 (QRKVQKQKKMQEKKKLQEQKMQEKKKLQEQR) are compositionally biased toward basic and acidic residues.

In terms of assembly, interacts with the CLOCK-BMAL1 heterodimer; this interaction inhibits CLOCK-BMAL1 transcriptional activation and suppress circadian timekeeping. Interacts with BMAL1. Testis-specific. Expressed in a broad range of cancer cells, including melanoma, lung cancer, and breast cancer (at protein level). Testis-specific. Found in histologically normal tissues from patients with uterus, lung and small intestine cancers. Widespread expression seen in solid tumors and diffuse large B-cell lymphoma (DLBCL)-derived cell lines. Isoform 2 is expressed in all DLBCL-derived cell lines, while isoform 1 is preferentially expressed in cell lines derived from non-germinal center DLBCL.

It is found in the nucleus. Its function is as follows. Functions as a suppressor of the biological clock that drives the daily circadian rhythms of cells throughout the body. Acts as a nuclear repressor of the CLOCK-BMAL1 heterodimer-mediated transcriptional activation of the core clock components. Inhibits circadian clock function in cancer cells, when overexpressed. This chain is Circadian clock protein PASD1, found in Homo sapiens (Human).